The sequence spans 280 residues: Inner kinetochore subunit fta1 (280 aa).

It belongs to the CENP-L/IML3 family. As to quaternary structure, component of the inner kinetochore constitutive centromere-associated network (CCAN) (also known as central kinetochore Sim4 complex in fission yeast), which is composed of at least cnl2, cnp3, cnp20, fta1, fta2, fta3, fta4, fta6, fta7, mal2, mhf1, mhf2, mis6, mis15, mis17, sim4 and wip1.

Its subcellular location is the nucleus. The protein resides in the chromosome. The protein localises to the centromere. It is found in the kinetochore. Its function is as follows. Component of the kinetochore, a multiprotein complex that assembles on centromeric DNA and attaches chromosomes to spindle microtubules, mediating chromosome segregation and sister chromatid segregation during meiosis and mitosis. Component of the inner kinetochore constitutive centromere-associated network (CCAN), which serves as a structural platform for outer kinetochore assembly. The polypeptide is Inner kinetochore subunit fta1 (fta1) (Schizosaccharomyces pombe (strain 972 / ATCC 24843) (Fission yeast)).